A 247-amino-acid chain; its full sequence is 2,3-bisphosphoglycerate-dependent phosphoglycerate mutase (247 aa).

Substrate-binding positions include 8–15, 21–22, R60, 87–90, K98, 114–115, and 183–184; these read RHGESTWN, TG, ERHY, RR, and GN. The active-site Tele-phosphohistidine intermediate is the H9. E87 serves as the catalytic Proton donor/acceptor.

It belongs to the phosphoglycerate mutase family. BPG-dependent PGAM subfamily. In terms of assembly, homodimer.

It carries out the reaction (2R)-2-phosphoglycerate = (2R)-3-phosphoglycerate. The protein operates within carbohydrate degradation; glycolysis; pyruvate from D-glyceraldehyde 3-phosphate: step 3/5. Catalyzes the interconversion of 2-phosphoglycerate and 3-phosphoglycerate. The polypeptide is 2,3-bisphosphoglycerate-dependent phosphoglycerate mutase (Delftia acidovorans (strain DSM 14801 / SPH-1)).